The primary structure comprises 248 residues: Probable transcriptional regulatory protein RHOS4_22610 (248 aa).

The interval 1–21 (MAGHSKWANIQHRKGKQDKLR) is disordered.

Belongs to the TACO1 family.

It is found in the cytoplasm. The sequence is that of Probable transcriptional regulatory protein RHOS4_22610 from Cereibacter sphaeroides (strain ATCC 17023 / DSM 158 / JCM 6121 / CCUG 31486 / LMG 2827 / NBRC 12203 / NCIMB 8253 / ATH 2.4.1.) (Rhodobacter sphaeroides).